We begin with the raw amino-acid sequence, 922 residues long: Isoleucine--tRNA ligase (922 aa).

The 'HIGH' region motif lies at 57 to 67; the sequence is PYANGDIHMGH. Glutamate 553 is an L-isoleucyl-5'-AMP binding site. Positions 594-598 match the 'KMSKS' region motif; it reads KMSKS. An ATP-binding site is contributed by lysine 597. Cysteine 889, cysteine 892, cysteine 909, and cysteine 912 together coordinate Zn(2+).

Belongs to the class-I aminoacyl-tRNA synthetase family. IleS type 1 subfamily. In terms of assembly, monomer. The cofactor is Zn(2+).

The protein localises to the cytoplasm. It carries out the reaction tRNA(Ile) + L-isoleucine + ATP = L-isoleucyl-tRNA(Ile) + AMP + diphosphate. Functionally, catalyzes the attachment of isoleucine to tRNA(Ile). As IleRS can inadvertently accommodate and process structurally similar amino acids such as valine, to avoid such errors it has two additional distinct tRNA(Ile)-dependent editing activities. One activity is designated as 'pretransfer' editing and involves the hydrolysis of activated Val-AMP. The other activity is designated 'posttransfer' editing and involves deacylation of mischarged Val-tRNA(Ile). This is Isoleucine--tRNA ligase from Bacillus licheniformis (strain ATCC 14580 / DSM 13 / JCM 2505 / CCUG 7422 / NBRC 12200 / NCIMB 9375 / NCTC 10341 / NRRL NRS-1264 / Gibson 46).